A 634-amino-acid chain; its full sequence is 1-deoxy-D-xylulose-5-phosphate synthase (634 aa).

Thiamine diphosphate is bound by residues His73 and 114–116 (GHS). A Mg(2+)-binding site is contributed by Asp145. Residues 146–147 (GS), Asn174, Phe285, and Glu367 contribute to the thiamine diphosphate site. Mg(2+) is bound at residue Asn174.

This sequence belongs to the transketolase family. DXPS subfamily. As to quaternary structure, homodimer. The cofactor is Mg(2+). Thiamine diphosphate serves as cofactor.

The catalysed reaction is D-glyceraldehyde 3-phosphate + pyruvate + H(+) = 1-deoxy-D-xylulose 5-phosphate + CO2. The protein operates within metabolic intermediate biosynthesis; 1-deoxy-D-xylulose 5-phosphate biosynthesis; 1-deoxy-D-xylulose 5-phosphate from D-glyceraldehyde 3-phosphate and pyruvate: step 1/1. Its function is as follows. Catalyzes the acyloin condensation reaction between C atoms 2 and 3 of pyruvate and glyceraldehyde 3-phosphate to yield 1-deoxy-D-xylulose-5-phosphate (DXP). The protein is 1-deoxy-D-xylulose-5-phosphate synthase of Syntrophotalea carbinolica (strain DSM 2380 / NBRC 103641 / GraBd1) (Pelobacter carbinolicus).